The sequence spans 565 residues: Sulfite reductase [NADPH] hemoprotein beta-component (565 aa).

The [4Fe-4S] cluster site is built by Cys429, Cys435, Cys474, and Cys478. Cys478 contributes to the siroheme binding site.

Belongs to the nitrite and sulfite reductase 4Fe-4S domain family. Alpha(8)-beta(8). The alpha component is a flavoprotein, the beta component is a hemoprotein. Siroheme is required as a cofactor. Requires [4Fe-4S] cluster as cofactor.

The catalysed reaction is hydrogen sulfide + 3 NADP(+) + 3 H2O = sulfite + 3 NADPH + 4 H(+). It functions in the pathway sulfur metabolism; hydrogen sulfide biosynthesis; hydrogen sulfide from sulfite (NADPH route): step 1/1. In terms of biological role, component of the sulfite reductase complex that catalyzes the 6-electron reduction of sulfite to sulfide. This is one of several activities required for the biosynthesis of L-cysteine from sulfate. This chain is Sulfite reductase [NADPH] hemoprotein beta-component, found in Shewanella sp. (strain W3-18-1).